The following is a 482-amino-acid chain: Nicotine dehydrogenase (482 aa).

The segment at residues 1–38 (MSDKTKTNEGFSRRSFIGSAAVVTAGVAGLGAIDAASA) is a signal peptide (tat-type signal). Positions 64, 83, 84, 85, 91, 108, and 279 each coordinate FAD. Thr381 is a binding site for (S)-nicotine. FAD contacts are provided by Ala453, Asn462, and Ile463.

Belongs to the flavin monoamine oxidase family. Monomer in solution. Homodimer in solution. Forms homodimers in the crystal. FAD serves as cofactor. In terms of processing, predicted to be exported by the Tat system. The position of the signal peptide cleavage has not been experimentally proven.

It localises to the periplasm. It catalyses the reaction (S)-nicotine + 2 Fe(III)-[cytochrome c] = N-methylmyosmine + 2 Fe(II)-[cytochrome c] + 2 H(+). It participates in alkaloid degradation; nicotine degradation. The catalytic rate is not significantly affected by pH. Functionally, involved in nicotine degradation. Catalyzes the conversion of nicotine to N-methylmyosmine. N-methylmyosmine undergoes spontaneous hydrolysis to form pseudooxynicotine (PN). S-nicotine is the optimal substrate. Has lower activity with some nicotine analogs, but shows no activity towards neurotransmitters, including serotonin, dopamine, and norepinephrine, nicotine metabolites and common neuroactive drugs. The enzyme is stereospecific with poor activity with (R)-nicotine as the substrate. The c-type cytochrome protein CycN is the physiological electron acceptor. O(2) is a poor electron acceptor. The polypeptide is Nicotine dehydrogenase (Pseudomonas putida (strain DSM 28022 / S16)).